A 239-amino-acid chain; its full sequence is UDP-2,3-diacylglucosamine hydrolase (239 aa).

Mn(2+) contacts are provided by aspartate 8, histidine 10, aspartate 41, asparagine 78, and histidine 113. A substrate-binding site is contributed by 78 to 79 (NR). Residues aspartate 121, serine 159, asparagine 163, lysine 166, and histidine 194 each coordinate substrate. Residues histidine 194 and histidine 196 each contribute to the Mn(2+) site.

This sequence belongs to the LpxH family. Mn(2+) is required as a cofactor.

The protein localises to the cell inner membrane. The catalysed reaction is UDP-2-N,3-O-bis[(3R)-3-hydroxytetradecanoyl]-alpha-D-glucosamine + H2O = 2-N,3-O-bis[(3R)-3-hydroxytetradecanoyl]-alpha-D-glucosaminyl 1-phosphate + UMP + 2 H(+). Its pathway is glycolipid biosynthesis; lipid IV(A) biosynthesis; lipid IV(A) from (3R)-3-hydroxytetradecanoyl-[acyl-carrier-protein] and UDP-N-acetyl-alpha-D-glucosamine: step 4/6. Functionally, hydrolyzes the pyrophosphate bond of UDP-2,3-diacylglucosamine to yield 2,3-diacylglucosamine 1-phosphate (lipid X) and UMP by catalyzing the attack of water at the alpha-P atom. Involved in the biosynthesis of lipid A, a phosphorylated glycolipid that anchors the lipopolysaccharide to the outer membrane of the cell. This Shewanella oneidensis (strain ATCC 700550 / JCM 31522 / CIP 106686 / LMG 19005 / NCIMB 14063 / MR-1) protein is UDP-2,3-diacylglucosamine hydrolase.